Here is a 247-residue protein sequence, read N- to C-terminus: Mycofactocin precursor peptide peptidase (247 aa).

A divalent metal cation-binding residues include Glu-38, His-40, Asp-49, His-124, and Glu-163.

The protein belongs to the creatininase superfamily. In terms of assembly, homooctamer. It depends on Fe(2+) as a cofactor. Requires Zn(2+) as cofactor.

The catalysed reaction is [mycofactocin precursor peptide]-C-terminal glycyl-N-{5-[(4-hydroxyphenyl)methyl]-4,4-dimethyl-2-oxopyrrolidin-3-yl}acetamide + H2O = [mycofactocin precursor peptide]-C-terminal glycine + 3-amino-5-[(4-hydroxyphenyl)methyl]-4,4-dimethyl-2-pyrrolidin-2-one. In terms of biological role, peptidase involved in the biosynthesis of the enzyme cofactor mycofactocin (MFT). Catalyzes cleavage of the MftC-modified MftA peptide to liberate its final two residues, which consist of a cross-linked valine-decarboxylated tyrosine dipeptide (named 3-amino-5-[(4-hydroxyphenyl)methyl]-4,4-dimethyl-2-pyrrolidin-2-one or ADHP). Is required for the in vivo ethanol assimilation in M.smegmatis. This Mycolicibacterium smegmatis (strain ATCC 700084 / mc(2)155) (Mycobacterium smegmatis) protein is Mycofactocin precursor peptide peptidase.